A 185-amino-acid chain; its full sequence is Ribosome-recycling factor (185 aa).

It belongs to the RRF family.

The protein resides in the cytoplasm. In terms of biological role, responsible for the release of ribosomes from messenger RNA at the termination of protein biosynthesis. May increase the efficiency of translation by recycling ribosomes from one round of translation to another. This is Ribosome-recycling factor from Edwardsiella ictaluri (strain 93-146).